Consider the following 3471-residue polypeptide: Abnormal spindle-like microcephaly-associated protein homolog (3471 aa).

The interval 1-26 (MANRRVGRGCWEVSPTERRPPAAEEE) is disordered. Serine 274, serine 277, serine 361, serine 386, and serine 419 each carry phosphoserine. The span at 555–564 (EVTPSSTTAS) shows a compositional bias: polar residues. Positions 555-576 (EVTPSSTTASVARKRKSDGSME) are disordered. At serine 599 the chain carries Phosphoserine. Positions 914–1050 (KASKEILLAF…LLWKIAFAFQ (137 aa)) constitute a Calponin-homology (CH) 1 domain. The stretch at 1051–1072 (VDISLNLDQLKEEIAFLKHTKS) forms a coiled coil. At serine 1097 the chain carries Phosphoserine. In terms of domain architecture, Calponin-homology (CH) 2 spans 1104 to 1255 (SENIKLLMDW…YLSFLCARLL (152 aa)). 39 consecutive IQ domains span residues 1341–1372 (QNKA…IILQ), 1387–1416 (YLWA…MLKS), 1576–1607 (LKKT…VIIQ), 1599–1628 (MKKA…KTRS), 1626–1655 (TRSA…SVIK), 1649–1678 (ILTS…ATIK), 1722–1751 (MRES…AVIS), 1745–1776 (QRKA…IVIQ), 1795–1824 (VKKA…AALK), 1818–1847 (QSIA…SIIK), 1868–1897 (TKAA…AALK), 1891–1922 (EHQA…LVIQ), 1941–1972 (LRHA…IIIQ), 1964–1995 (QHKC…LLIQ), 2014–2043 (TKAA…AAVT), 2037–2068 (CNKA…IIIQ), 2087–2118 (LKKT…TFIK), 2110–2141 (MHRA…IVIQ), 2160–2191 (ILKA…TLIQ), 2183–2212 (MQIA…ITKT), 2233–2264 (LRHS…TLIQ), 2256–2287 (MHIA…IWIQ), 2305–2336 (VQNA…TFIQ), 2378–2409 (QRHS…TLIQ), 2401–2432 (MHSS…IFVQ), 2451–2482 (LRKS…VLIQ), 2524–2555 (QWHS…IIIQ), 2659–2690 (RTQA…TLIQ), 2682–2713 (MHRA…VVIQ), 2732–2761 (VQKS…EKMA), 2853–2884 (QKRA…VVLQ), 2903–2932 (IRSS…STIK), 2926–2957 (IKNS…KIQA), 2948–2979 (KVKA…KIIQ), 3023–3054 (RHRA…LVIQ), 3073–3104 (FKKS…RLLH), 3134–3163 (QVNS…SIKK), 3175–3204 (QNRA…GIIK), and 3198–3229 (FTSG…IRLS).

It is found in the cytoplasm. Its subcellular location is the cytoskeleton. The protein localises to the spindle. It localises to the nucleus. Probable role in mitotic spindle regulation and coordination of mitotic processes. May have a preferential role in regulating neurogenesis. This Pongo pygmaeus (Bornean orangutan) protein is Abnormal spindle-like microcephaly-associated protein homolog (ASPM).